Consider the following 305-residue polypeptide: NDP-polyphosphate phosphotransferase 1 (305 aa).

Belongs to the polyphosphate kinase 2 (PPK2) family. Class I subfamily.

The enzyme catalyses [phosphate](n) + ATP = [phosphate](n+1) + ADP. It catalyses the reaction [phosphate](n) + CTP = [phosphate](n+1) + CDP. The catalysed reaction is [phosphate](n) + GTP = [phosphate](n+1) + GDP. It carries out the reaction [phosphate](n) + UTP = [phosphate](n+1) + UDP. Its activity is regulated as follows. Shows little dependence on metals. Uses inorganic polyphosphate (polyP) as a donor to convert NDP to NTP. PolyP hydrolysis is slightly faster with GDP, but it can also use ADP, CDP and UDP. In Ruegeria pomeroyi (strain ATCC 700808 / DSM 15171 / DSS-3) (Silicibacter pomeroyi), this protein is NDP-polyphosphate phosphotransferase 1.